Consider the following 615-residue polypeptide: Putative HPr kinase/phosphorylase (615 aa).

Residue glycine 480–serine 487 participates in ATP binding.

It belongs to the HPrK/P family.

It carries out the reaction [HPr protein]-L-serine + ATP = [HPr protein]-O-phospho-L-serine + ADP + H(+). It catalyses the reaction [HPr protein]-O-phospho-L-serine + phosphate + H(+) = [HPr protein]-L-serine + diphosphate. Its function is as follows. Catalyzes the ATP- as well as the pyrophosphate-dependent phosphorylation of a specific serine residue in HPr, a phosphocarrier protein of the phosphoenolpyruvate-dependent sugar phosphotransferase system (PTS). HprK/P also catalyzes the pyrophosphate-producing, inorganic phosphate-dependent dephosphorylation (phosphorolysis) of seryl-phosphorylated HPr (P-Ser-HPr). The protein is Putative HPr kinase/phosphorylase (hprK) of Fusobacterium nucleatum subsp. nucleatum (strain ATCC 25586 / DSM 15643 / BCRC 10681 / CIP 101130 / JCM 8532 / KCTC 2640 / LMG 13131 / VPI 4355).